We begin with the raw amino-acid sequence, 625 residues long: Enolase 4 (625 aa).

The tract at residues 184–226 (YSTVPTPLPPVPPPPPPPPPTKKKGQKPGRKDTITEKPIAPAE) is disordered. Pro residues predominate over residues 189 to 203 (TPLPPVPPPPPPPPP). Valine 300 contacts substrate. The tract at residues 331–350 (PSPPKAETKKGHDGSKRGQQ) is disordered. Over residues 336–346 (AETKKGHDGSK) the composition is skewed to basic and acidic residues. Asparagine 497 acts as the Proton acceptor in catalysis. Substrate is bound at residue glycine 548. Residues 604 to 625 (PLVPTFPTQGVEESAETGASSG) form a disordered region.

Belongs to the enolase family. As to quaternary structure, interacts with ENO1 and AKAP4. In terms of processing, synthesized as an approximately 70-kDa precursor, which then undergoes proteolytic cleavage to an approximately 60-kDa enzyme; HOATZ associates directly or indirectly with ENO4 to mediate this process before its transport to mature flagella.

It catalyses the reaction (2R)-2-phosphoglycerate = phosphoenolpyruvate + H2O. Its pathway is carbohydrate degradation; glycolysis; pyruvate from D-glyceraldehyde 3-phosphate: step 4/5. Its function is as follows. May be required for sperm motility and function. This is Enolase 4 from Homo sapiens (Human).